We begin with the raw amino-acid sequence, 1182 residues long: uncharacterized protein (1182 aa).

Residues 618–638 (GSSSLVCSVMVVIFSIILYYL) form a helical membrane-spanning segment.

Its subcellular location is the host membrane. This is an uncharacterized protein from Callospermophilus lateralis (Golden-mantled ground squirrel).